Reading from the N-terminus, the 352-residue chain is 3-isopropylmalate dehydrogenase (352 aa).

Arg-91, Arg-101, Arg-129, and Asp-218 together coordinate substrate. Mg(2+) contacts are provided by Asp-218, Asp-242, and Asp-246. An NAD(+)-binding site is contributed by 281–293 (GSAPDIAGKGLAN).

Belongs to the isocitrate and isopropylmalate dehydrogenases family. LeuB type 1 subfamily. As to quaternary structure, homodimer. The cofactor is Mg(2+). It depends on Mn(2+) as a cofactor.

The protein localises to the cytoplasm. It catalyses the reaction (2R,3S)-3-isopropylmalate + NAD(+) = 4-methyl-2-oxopentanoate + CO2 + NADH. Its pathway is amino-acid biosynthesis; L-leucine biosynthesis; L-leucine from 3-methyl-2-oxobutanoate: step 3/4. Catalyzes the oxidation of 3-carboxy-2-hydroxy-4-methylpentanoate (3-isopropylmalate) to 3-carboxy-4-methyl-2-oxopentanoate. The product decarboxylates to 4-methyl-2 oxopentanoate. This chain is 3-isopropylmalate dehydrogenase, found in Novosphingobium aromaticivorans (strain ATCC 700278 / DSM 12444 / CCUG 56034 / CIP 105152 / NBRC 16084 / F199).